Consider the following 245-residue polypeptide: Aliphatic sulfonates import ATP-binding protein SsuB 1 (245 aa).

The ABC transporter domain maps to 8 to 223 (VSITGLRKSF…ERADPDILRY (216 aa)). 40 to 47 (GPSGTGKT) contacts ATP.

It belongs to the ABC transporter superfamily. Aliphatic sulfonates importer (TC 3.A.1.17.2) family. The complex is composed of two ATP-binding proteins (SsuB), two transmembrane proteins (SsuC) and a solute-binding protein (SsuA).

The protein resides in the cell membrane. The enzyme catalyses ATP + H2O + aliphatic sulfonate-[sulfonate-binding protein]Side 1 = ADP + phosphate + aliphatic sulfonateSide 2 + [sulfonate-binding protein]Side 1.. Its function is as follows. Part of the ABC transporter complex SsuABC involved in aliphatic sulfonates import. Responsible for energy coupling to the transport system. The protein is Aliphatic sulfonates import ATP-binding protein SsuB 1 of Nocardia farcinica (strain IFM 10152).